The chain runs to 132 residues: Telomere bouquet protein 1 (132 aa).

Interacts with bqt2 and sad1. The bqt1-bqt2-sad1 complex binds rap1.

It is found in the cytoplasm. The protein localises to the cytoskeleton. The protein resides in the microtubule organizing center. It localises to the spindle pole body. Its subcellular location is the chromosome. It is found in the telomere. Its function is as follows. Involved in chromosome segregation. During meiotic prophase, connects telomeres to the spindle pole body by forming a bridge between the telomere protein rap1 and the spindle pole body protein sad1. This chain is Telomere bouquet protein 1 (bqt1), found in Schizosaccharomyces pombe (strain 972 / ATCC 24843) (Fission yeast).